Here is an 80-residue protein sequence, read N- to C-terminus: Exodeoxyribonuclease 7 small subunit (80 aa).

This sequence belongs to the XseB family. Heterooligomer composed of large and small subunits.

The protein resides in the cytoplasm. It catalyses the reaction Exonucleolytic cleavage in either 5'- to 3'- or 3'- to 5'-direction to yield nucleoside 5'-phosphates.. Its function is as follows. Bidirectionally degrades single-stranded DNA into large acid-insoluble oligonucleotides, which are then degraded further into small acid-soluble oligonucleotides. The protein is Exodeoxyribonuclease 7 small subunit of Oleidesulfovibrio alaskensis (strain ATCC BAA-1058 / DSM 17464 / G20) (Desulfovibrio alaskensis).